Here is a 212-residue protein sequence, read N- to C-terminus: uncharacterized protein (212 aa).

The next 4 helical transmembrane spans lie at 20–40 (FLIGFFTEYGYWAVLFVLIIC), 70–90 (LMLLVSMIGVLAGDSCMYWLG), 155–175 (FVLIDFCAAIISVPIWIYLGE), and 192–212 (QIVIYIFIGYLYYSFLEMEKI).

It belongs to the DedA family.

The protein localises to the cell membrane. This is an uncharacterized protein from Haemophilus influenzae (strain ATCC 51907 / DSM 11121 / KW20 / Rd).